The chain runs to 236 residues: MSIPILNYSLSTQNQRVNGFEGLPGDELPKIYTTDNLPTSIEMDEIIWAAYRQIFSEHQMLSSCMDRFLESQLRFNQIKVKDFIKGLVLSSAFRNLNYDCNNNYRFVEMCIQRVLGRDIYNEREKLAFAIIIASQGIETFVDFLLNSDEYIENFGDNTVPYQRRRIIAQRSKGEIPFNLKTPRLDYNFLYKKNMPQLLWSGPVRQFRPQEQKPKAGDPALFLNMVLDVSPSYLISS.

The region spanning 11–193 (STQNQRVNGF…LDYNFLYKKN (183 aa)) is the PBS-linker domain.

This sequence belongs to the phycobilisome linker protein family. The phycobilisome is a hemidiscoidal structure that is composed of two distinct substructures: a core complex and a number of rods radiating from the core.

Its subcellular location is the plastid. It is found in the chloroplast. It localises to the chloroplast thylakoid membrane. Functionally, rod-core linker protein required for attachment of phycocyanin to allophycocyanin in cores of phycobilisomes. Linker polypeptides determine the state of aggregation and the location of the disk-shaped phycobiliprotein units within the phycobilisome and modulate their spectroscopic properties in order to mediate a directed and optimal energy transfer. The sequence is that of Phycobilisome rod-core linker polypeptide cpcG (cpcG) from Aglaothamnion neglectum (Red alga).